A 145-amino-acid chain; its full sequence is Zinc finger C2H2 protein ECU06_1150 (145 aa).

The segment at 35–57 (KDCARYGEAQASKHALLAHARRH) adopts a C2H2-type 1; atypical zinc-finger fold. The C2H2-type 2 zinc-finger motif lies at 63–85 (FECHLCGKDYTRSDPLKKHLLRH).

This chain is Zinc finger C2H2 protein ECU06_1150, found in Encephalitozoon cuniculi (strain GB-M1) (Microsporidian parasite).